The chain runs to 263 residues: Protein PUN1 (263 aa).

Over Met-1–Thr-6 the chain is Cytoplasmic. Residues Leu-7–Gly-27 form a helical membrane-spanning segment. Over Ser-28–Cys-143 the chain is Extracellular. Asn-100 is a glycosylation site (N-linked (GlcNAc...) asparagine). A helical membrane pass occupies residues Met-144 to Leu-164. Over Arg-165–Pro-172 the chain is Cytoplasmic. Residues Leu-173 to Gly-193 form a helical membrane-spanning segment. Over Ser-194–Tyr-223 the chain is Extracellular. N-linked (GlcNAc...) asparagine glycosylation occurs at Asn-209. Residues Gln-224–Val-244 form a helical membrane-spanning segment. Topologically, residues Arg-245–Ile-263 are cytoplasmic. Residue Lys-260 forms a Glycyl lysine isopeptide (Lys-Gly) (interchain with G-Cter in ubiquitin) linkage.

This sequence belongs to the SUR7 family. N-glycosylated.

It is found in the cell membrane. Contributes to the wild-type cellular response to nitrogen stress through signaling pathways that regulate the expression of genes involved in amino acid biosynthesis. Required for wild-type filamentous growth, cell growth, and cell-cell adhesion. In Saccharomyces cerevisiae (strain ATCC 204508 / S288c) (Baker's yeast), this protein is Protein PUN1 (PUN1).